Here is a 336-residue protein sequence, read N- to C-terminus: Mitochondrial amidoxime reducing component 2 (336 aa).

The transit peptide at 1–35 (MGAAGSSALARLGLPALPGPRWLGVAALGLAAVAL) directs the protein to the mitochondrion. Residues K138, K144, K173, K187, K287, and K294 each participate in a glycyl lysine isopeptide (Lys-Gly) (interchain with G-Cter in ubiquitin) cross-link. The MOSC domain maps to 188–334 (ARASNEIFPS…LKVGDPVYQM (147 aa)).

In terms of assembly, component of a complex composed of cytochrome b5, NADH-cytochrome b5 reductase (CYB5R3) and MTARC2. Mo-molybdopterin serves as cofactor. Ubiquitinated by PRKN during mitophagy, leading to its degradation and enhancement of mitophagy. Deubiquitinated by USP30.

The protein resides in the mitochondrion outer membrane. Its subcellular location is the peroxisome. It catalyses the reaction N(omega)-hydroxy-L-arginine + 2 Fe(II)-[cytochrome b5] + 2 H(+) = L-arginine + 2 Fe(III)-[cytochrome b5] + H2O. Its function is as follows. Catalyzes the reduction of N-oxygenated molecules, acting as a counterpart of cytochrome P450 and flavin-containing monooxygenases in metabolic cycles. As a component of prodrug-converting system, reduces a multitude of N-hydroxylated prodrugs particularly amidoximes, leading to increased drug bioavailability. May be involved in mitochondrial N(omega)-hydroxy-L-arginine (NOHA) reduction, regulating endogenous nitric oxide levels and biosynthesis. Postulated to cleave the N-OH bond of N-hydroxylated substrates in concert with electron transfer from NADH to cytochrome b5 reductase then to cytochrome b5, the ultimate electron donor that primes the active site for substrate reduction. The polypeptide is Mitochondrial amidoxime reducing component 2 (MTARC2) (Bos taurus (Bovine)).